The following is a 629-amino-acid chain: Dihydroxy-acid dehydratase 2 (629 aa).

Position 82 (Asp82) interacts with Mg(2+). Cys123 lines the [2Fe-2S] cluster pocket. 2 residues coordinate Mg(2+): Asp124 and Lys125. Lys125 bears the N6-carboxylysine mark. Position 197 (Cys197) interacts with [2Fe-2S] cluster. Glu493 provides a ligand contact to Mg(2+). The active-site Proton acceptor is the Ser519. Residues 603-629 (DKGGVRRLPPDELGGPEAAFDTQTRAG) are disordered.

Belongs to the IlvD/Edd family. In terms of assembly, homodimer. It depends on [2Fe-2S] cluster as a cofactor. Requires Mg(2+) as cofactor.

It catalyses the reaction (2R)-2,3-dihydroxy-3-methylbutanoate = 3-methyl-2-oxobutanoate + H2O. The enzyme catalyses (2R,3R)-2,3-dihydroxy-3-methylpentanoate = (S)-3-methyl-2-oxopentanoate + H2O. Its pathway is amino-acid biosynthesis; L-isoleucine biosynthesis; L-isoleucine from 2-oxobutanoate: step 3/4. It functions in the pathway amino-acid biosynthesis; L-valine biosynthesis; L-valine from pyruvate: step 3/4. Functions in the biosynthesis of branched-chain amino acids. Catalyzes the dehydration of (2R,3R)-2,3-dihydroxy-3-methylpentanoate (2,3-dihydroxy-3-methylvalerate) into 2-oxo-3-methylpentanoate (2-oxo-3-methylvalerate) and of (2R)-2,3-dihydroxy-3-methylbutanoate (2,3-dihydroxyisovalerate) into 2-oxo-3-methylbutanoate (2-oxoisovalerate), the penultimate precursor to L-isoleucine and L-valine, respectively. This is Dihydroxy-acid dehydratase 2 from Nocardia farcinica (strain IFM 10152).